The following is a 383-amino-acid chain: uncharacterized protein (383 aa).

The next 2 membrane-spanning stretches (helical) occupy residues 49 to 69 (VDLL…GCVA) and 347 to 367 (LLGG…PVAG).

To M.tuberculosis Rv0874c.

The protein resides in the cell membrane. This is an uncharacterized protein from Mycobacterium tuberculosis (strain CDC 1551 / Oshkosh).